Here is a 339-residue protein sequence, read N- to C-terminus: DNA repair protein RAD51 homolog 1 (339 aa).

Residues 1-22 (MAMQMQLEASADTSVEEESFGP) are disordered. Alanine 2 bears the N-acetylalanine mark. Residue threonine 13 is modified to Phosphothreonine. At serine 14 the chain carries Phosphoserine. Residues 48–77 (TVEAVAYAPKKELINIKGISEAKADKILTE) form the HhH domain. Residue tyrosine 54 is modified to Phosphotyrosine; by ABL1. Residues lysine 58 and lysine 64 each participate in a glycyl lysine isopeptide (Lys-Gly) (interchain with G-Cter in ubiquitin) cross-link. 127 to 134 (GEFRTGKT) contacts ATP. The interaction with PALB2 stretch occupies residues 184–257 (DVLDNVAYAR…FLRMLLRLAD (74 aa)). Residues 245 to 260 (LARFLRMLLRLADEFG) carry the Nuclear export signal; masked by the interaction with BRCA2 motif. A Phosphothreonine; by CHEK1 modification is found at threonine 309.

This sequence belongs to the RecA family. RAD51 subfamily. Forms linear homooligomers, giving rise to a RAD51 nucleoprotein filament, which is essential for strand-pairing reactions during DNA recombination. Interacts with BRCA1 and either directly or indirectly with p53. Interacts with XRCC3, RAD54L and RAD54B. Interacts with the BCDX2 subcomplex RAD51C:RAD51B. Component of the homologous recombination repair (HR) complex composed of ERCC5/XPG, BRCA2, PALB2, DSS1 and RAD51. Interacts directly with PALB2 which may serve as a scaffold for a HR complex containing PALB2, BRCA2, RAD51C, RAD51 and XRCC3. Interacts with RAD51AP1 and RAD51AP2. Interacts with CHEK1, and this may require prior phosphorylation of CHEK1. Interacts with the MND1-PSMC3IP heterodimer. Found in a complex, at least composed of BLM, RAD51 and SPIDR; the complex formation is mediated by SPIDR. Interacts with SPIDR; the interaction is direct and recruits RAD51 to DNA damage sites. Interacts with FIGNL1 (via N-terminal one-half region); the interaction is direct. Interacts with RAD51AP1 (via C-terminal region); the interaction is direct. Interacts with NABP2, RPA1, PALB2 and RAD51. Interacts with SWI5/C9orf119, and at lower level with SFR1/MEIR5. Interacts with hyperphosphorylated RPA2; this interaction is necessary for efficient recruitment to chromatin in response to DNA damage. Interacts with SWSAP1; involved in homologous recombination repair. Interacts with PARPBP, BRCA2 and RECQL5; these interactions interfere with the formation of the RAD51-DNA homologous recombination structure. Interacts with POLQ; POLQ acts as an inhibitor of homology-recombination repair (HR) pathway by limiting RAD51 accumulation at resected ends. Interacts with POLN. Interacts with FBH1. Interacts with RFWD3. Interacts with the MCM8-MCM9 complex; the interaction recruits RAD51 to DNA damage sites. Component of a multiprotein complex with MEIOB and SPATA22. Interacts with the complex BRME1:HSF2BP:BRCA2. Interacts with HELQ; stimulating HELQ DNA helicase activity and ability to unwing DNA. Interacts with MMS22L; the interaction is direct and promotes recruitment of RAD51 to sites of DNA damage. Interacts with the ATAD5 RFC-like complex. Within the ATAD5 RFC-like complex, interacts with ATAD5 (via N-terminus); the interaction is direct and enhanced under replication stress. Interacts with WDR48; the interaction is enhanced under replication stress. Interacts with DNA helicase ZGRF1; the interaction promotes RAD51 strand exchange activity. Interacts (when phosphorylated) with TOPBP1; interaction takes place following phosphorylation by CK2 and PLK1 and promotes recruitment to DNA damage sites. Interacts with GRB2; this interaction inhibits RAD51 ATPase activity to stabilize RAD51 on stalled replication forks. In terms of processing, ubiquitinated by the SCF(FBH1) E3 ubiquitin ligase complex, regulating RAD51 subcellular location and preventing its association with DNA. Ubiquitinated by RFWD3 in response to DNA damage: ubiquitination leads to degradation by the proteasome, promoting homologous recombination. Phosphorylation of Thr-309 by CHEK1 may enhance association with chromatin at sites of DNA damage and promote DNA repair by homologous recombination. Phosphorylated at Ser-14 by PLK1, triggering phosphorylation at Thr-13 by CK2, thereby promoting interaction with TOPBP1 and recruitment to DNA damage sites during S-phase. Phosphorylation by ABL1 inhibits function. In terms of tissue distribution, expressed in the testes (at protein level). Expressed in the brain (at protein level). Expressed in the thymus, spleen, ovary and small intestine.

The protein resides in the nucleus. It is found in the cytoplasm. Its subcellular location is the perinuclear region. The protein localises to the mitochondrion matrix. It localises to the chromosome. The protein resides in the cytoskeleton. It is found in the microtubule organizing center. Its subcellular location is the centrosome. Its function is as follows. Plays an important role in homologous strand exchange, a key step in DNA repair through homologous recombination (HR). Binds to single-stranded DNA in an ATP-dependent manner to form nucleoprotein filaments which are essential for the homology search and strand exchange. Catalyzes the recognition of homology and strand exchange between homologous DNA partners to form a joint molecule between a processed DNA break and the repair template. Recruited to resolve stalled replication forks during replication stress. Part of a PALB2-scaffolded HR complex containing BRCA2 and RAD51C and which is thought to play a role in DNA repair by HR. Plays a role in regulating mitochondrial DNA copy number under conditions of oxidative stress in the presence of RAD51C and XRCC3. Also involved in interstrand cross-link repair. The polypeptide is DNA repair protein RAD51 homolog 1 (Mus musculus (Mouse)).